A 357-amino-acid polypeptide reads, in one-letter code: tRNA N6-adenosine threonylcarbamoyltransferase (357 aa).

Residues histidine 120 and histidine 124 each contribute to the Fe cation site. Substrate is bound by residues 143–147 (LVSGG), aspartate 176, glycine 189, and asparagine 289. Position 317 (aspartate 317) interacts with Fe cation.

Belongs to the KAE1 / TsaD family. Fe(2+) is required as a cofactor.

Its subcellular location is the cytoplasm. The catalysed reaction is L-threonylcarbamoyladenylate + adenosine(37) in tRNA = N(6)-L-threonylcarbamoyladenosine(37) in tRNA + AMP + H(+). Required for the formation of a threonylcarbamoyl group on adenosine at position 37 (t(6)A37) in tRNAs that read codons beginning with adenine. Is involved in the transfer of the threonylcarbamoyl moiety of threonylcarbamoyl-AMP (TC-AMP) to the N6 group of A37, together with TsaE and TsaB. TsaD likely plays a direct catalytic role in this reaction. In Polynucleobacter asymbioticus (strain DSM 18221 / CIP 109841 / QLW-P1DMWA-1) (Polynucleobacter necessarius subsp. asymbioticus), this protein is tRNA N6-adenosine threonylcarbamoyltransferase.